Here is a 96-residue protein sequence, read N- to C-terminus: Protein RnfH (96 aa).

It belongs to the UPF0125 (RnfH) family.

The polypeptide is Protein RnfH (Citrobacter koseri (strain ATCC BAA-895 / CDC 4225-83 / SGSC4696)).